A 470-amino-acid polypeptide reads, in one-letter code: Ribulose bisphosphate carboxylase large chain (470 aa).

Positions 115 and 165 each coordinate substrate. The active-site Proton acceptor is the K167. K169 contributes to the substrate binding site. Positions 193, 195, and 196 each coordinate Mg(2+). K193 is modified (N6-carboxylysine). H286 serves as the catalytic Proton acceptor. 3 residues coordinate substrate: R287, H319, and S371.

Belongs to the RuBisCO large chain family. Type I subfamily. In terms of assembly, heterohexadecamer of 8 large chains and 8 small chains. Mg(2+) serves as cofactor.

The protein localises to the carboxysome. It carries out the reaction 2 (2R)-3-phosphoglycerate + 2 H(+) = D-ribulose 1,5-bisphosphate + CO2 + H2O. It catalyses the reaction D-ribulose 1,5-bisphosphate + O2 = 2-phosphoglycolate + (2R)-3-phosphoglycerate + 2 H(+). Its function is as follows. RuBisCO catalyzes two reactions: the carboxylation of D-ribulose 1,5-bisphosphate, the primary event in carbon dioxide fixation, as well as the oxidative fragmentation of the pentose substrate in the photorespiration process. Both reactions occur simultaneously and in competition at the same active site. In Prochlorococcus marinus (strain SARG / CCMP1375 / SS120), this protein is Ribulose bisphosphate carboxylase large chain.